An 875-amino-acid polypeptide reads, in one-letter code: Valine--tRNA ligase (875 aa).

Residues 44 to 54 (PNVTGKLHLGH) carry the 'HIGH' region motif. The short motif at 520-524 (KMSKS) is the 'KMSKS' region element. Lysine 523 lines the ATP pocket. Residues 804 to 875 (LEGLINIEEE…VRARLAQLKQ (72 aa)) adopt a coiled-coil conformation.

Belongs to the class-I aminoacyl-tRNA synthetase family. ValS type 1 subfamily. Monomer.

The protein localises to the cytoplasm. The enzyme catalyses tRNA(Val) + L-valine + ATP = L-valyl-tRNA(Val) + AMP + diphosphate. Functionally, catalyzes the attachment of valine to tRNA(Val). As ValRS can inadvertently accommodate and process structurally similar amino acids such as threonine, to avoid such errors, it has a 'posttransfer' editing activity that hydrolyzes mischarged Thr-tRNA(Val) in a tRNA-dependent manner. The protein is Valine--tRNA ligase of Anoxybacillus flavithermus (strain DSM 21510 / WK1).